Consider the following 176-residue polypeptide: Interleukin-7 (176 aa).

Residues 1–25 form the signal peptide; sequence MFHVSFRYIFGIPPLILVLLPVASS. Cystine bridges form between cysteine 27/cysteine 165, cysteine 58/cysteine 153, and cysteine 71/cysteine 116. N-linked (GlcNAc...) asparagine glycans are attached at residues asparagine 94, asparagine 115, and asparagine 140.

This sequence belongs to the IL-7/IL-9 family.

The protein localises to the secreted. Its function is as follows. Hematopoietic growth factor capable of stimulating the proliferation of lymphoid progenitors. It is important for proliferation during certain stages of B-cell maturation. This is Interleukin-7 (IL7) from Sus scrofa (Pig).